The following is a 719-amino-acid chain: MALTKLRFVNQFSQWLCVRKGYIHSLPENLAALQKAIEVLKTKHDDVKRRVDKEEFLGRRHRLSQVQVEIERLCFCGFCSKSFGKSYHYGKMVSVMLKEVENLSSRGVFDVVTEENLVAQVEEMPIQSTVVGQETMLERVWNTLMKDGFKIMGLYGMGGVGKTTLLTQINKKFSETDGGFDIVMWVVVSKTSEIYRIQEDIAKRLGLTGEEWDKKNENKRAVDIHNVLRRHKFVLLLDDIWEKVNLELVGVPYPSRENGSIVAFTTRSRDVCGRMGVDDPMQVSCLEPEDAWDLFQNKVGENTLKSHPDIPELAKQVAEKCRGLPLALNVIGETMACKSTVQEWRHAIDEEWKKTEVKMHDVVREMALWISSDLGKHKDQCIVRAGVGLHAVPEVKNWRAVRRMSLMKNELEKILGCPTCPQLTTLLLQKNHKLVNISGEFFRFMPNLVVLDLSWNSSLTGLPKKISEVETTNTSEFGVHEEFGEYAGVSKLLSLKTLRLQKSKKALDVNSAKELQLLEHIEVLTIDIFSKVEEESFKILTFPSMCNIRRIGIWKCGMKEIKVEMRTSSCFSSLSKVVIGQCDGLKELTWLLFAPNLTYLDARFAEQLEDIISEEKAASVTDENASIIIPFQKLECLSLSDLPKLKSIYWSPLSFPRLSELAVQEHCPKLKKLPLNSKSGTAGVELVVKYGENKWLEGVEWEDKATELRFLATCKSLYR.

Residues 25 to 73 (SLPENLAALQKAIEVLKTKHDDVKRRVDKEEFLGRRHRLSQVQVEIERL) are a coiled coil. In terms of domain architecture, NB-ARC spans 114–418 (EENLVAQVEE…NELEKILGCP (305 aa)). Position 156–163 (156–163 (GMGGVGKT)) interacts with ATP. 3 LRR repeats span residues 400 to 421 (AVRRMSLMKNELEKILGCPTCP), 422 to 444 (QLTTLLLQKNHKLVNISGEFFRF), and 447 to 469 (NLVVLDLSWNSSLTGLPKKISEV).

It belongs to the disease resistance NB-LRR family.

In terms of biological role, probable disease resistance protein. In Arabidopsis thaliana (Mouse-ear cress), this protein is Probable disease resistance protein At4g14610.